A 551-amino-acid chain; its full sequence is PA-phosphatase related-family protein DDB_G0268928 (551 aa).

Composition is skewed to polar residues over residues 26 to 47 and 137 to 152; these read TESL…SGKD and KYNT…SSNK. 2 disordered regions span residues 26-50 and 123-172; these read TESL…DYSS and KGED…NNNN. Low complexity predominate over residues 153–171; sequence TQTTVLNNSTTSSNNINNN. Helical transmembrane passes span 211–231, 232–252, 273–293, 346–366, 393–413, 474–494, and 500–520; these read SYSD…SIIY, SLLV…LVFI, LAVG…AVVL, ILQL…IYIL, MFIC…LIFP, ILPA…IATM, and YFVD…YGGF.

It belongs to the PA-phosphatase related phosphoesterase family.

The protein resides in the membrane. The polypeptide is PA-phosphatase related-family protein DDB_G0268928 (Dictyostelium discoideum (Social amoeba)).